A 3994-amino-acid polypeptide reads, in one-letter code: Hybrid PKS-NRPs synthetase opdA (3994 aa).

The Ketosynthase family 3 (KS3) domain maps to 6 to 442 (PEPIAIVGSS…GTNSHVILES (437 aa)). Catalysis depends on for beta-ketoacyl synthase activity residues cysteine 179, histidine 316, and histidine 362. A malonyl-CoA:ACP transacylase (MAT) domain region spans residues 559–881 (VFTGQGAQWP…LKRDSNDVEA (323 aa)). An N-terminal hotdog fold region spans residues 951-1085 (HELLGRRTHD…GRLIIHLGET (135 aa)). The segment at 951 to 1251 (HELLGRRTHD…SVKPMAPPTA (301 aa)) is dehydratase (DH) domain. The PKS/mFAS DH domain maps to 951-1252 (HELLGRRTHD…VKPMAPPTAE (302 aa)). The Proton acceptor; for dehydratase activity role is filled by histidine 983. A C-terminal hotdog fold region spans residues 1100 to 1252 (LLSVDTDEGY…VKPMAPPTAE (153 aa)). Aspartate 1159 serves as the catalytic Proton donor; for dehydratase activity. The interval 1292–1593 (DRVVLYYVQR…VDLAFHDLPD (302 aa)) is methyltransferase (MT) domain. Positions 2123–2297 (TYLMVGMAGG…ASIIHIGFVT (175 aa)) are ketoreductase (KR) domain. Residues 2406–2483 (EAVEITQKAF…QICTNAAKQL (78 aa)) form the Carrier 1 domain. At serine 2443 the chain carries O-(pantetheine 4'-phosphoryl)serine. The interval 2486–2575 (QKGGQEPSEQ…FDPDDRDYNP (90 aa)) is disordered. 2 stretches are compositionally biased toward polar residues: residues 2505 to 2514 (LHVSQGSLHT) and 2522 to 2546 (TETSSVGGTENTPLTSASSSPSVTD). Residues 2547–2556 (TVEKRDKGDI) show a composition bias toward basic and acidic residues. The segment covering 2557-2570 (SVDEGPNEQFDPDD) has biased composition (acidic residues). The tract at residues 2582–3007 (RLSSGQSRIY…SNTYMTVAKI (426 aa)) is condensation (C) domain. The segment at 3043-3436 (HETNREDLAI…DGSLVFLGRL (394 aa)) is adenylation (A) (KR) domain. One can recognise a Carrier 2 domain in the interval 3553 to 3630 (PKLSLRQSEL…KMTMLVDLER (78 aa)). O-(pantetheine 4'-phosphoryl)serine is present on serine 3590. Positions 3679–3895 (TGATGFLGGS…FDFKKVEEVA (217 aa)) are reductase (RED) domain.

In the C-terminal section; belongs to the NRP synthetase family. Pantetheine 4'-phosphate serves as cofactor.

It participates in secondary metabolite biosynthesis. Functionally, hybrid PKS-NRPS synthetase; part of the gene cluster that mediates the biosynthesis of oxopyrrolidines, polyketide-amino acid hybrid compounds with feature structures of tetramic acid. The polyketide chain is first assembled by the highly reducing PKS module of opdA using acetyl-CoA as the starter unit and five malonyl-CoA as the extender units. OpdC acts as trans-acting enoyl reductase and reduces the terminal alkenyl to alkane. The 17R in oxopyrrolidine A and 15R, 17S in oxopyrrolidine B are generated by non-stereospecific catalysis of the ketoreductase (KR) domain and enoyl reductases. Then the polyketides with specific configurations are transferred to the NRPS module of opdA and linked to L-tyrosine to form an amide bond. Finally, the oxopyrrolidines are offloaded through a Dieckmann cyclization catalyzed by the terminal D domain to give a tetramic acid moiety. The polypeptide is Hybrid PKS-NRPs synthetase opdA (Penicillium oxalicum (strain 114-2 / CGMCC 5302) (Penicillium decumbens)).